Consider the following 257-residue polypeptide: Type III pantothenate kinase (257 aa).

6-13 (DCGNTNTV) is a binding site for ATP. 107–110 (GPDR) lines the substrate pocket. Asp-109 (proton acceptor) is an active-site residue. Position 129 (Asp-129) interacts with K(+). Thr-132 provides a ligand contact to ATP. Thr-184 contributes to the substrate binding site.

The protein belongs to the type III pantothenate kinase family. Homodimer. Requires NH4(+) as cofactor. K(+) is required as a cofactor.

It is found in the cytoplasm. It carries out the reaction (R)-pantothenate + ATP = (R)-4'-phosphopantothenate + ADP + H(+). It functions in the pathway cofactor biosynthesis; coenzyme A biosynthesis; CoA from (R)-pantothenate: step 1/5. In terms of biological role, catalyzes the phosphorylation of pantothenate (Pan), the first step in CoA biosynthesis. This is Type III pantothenate kinase from Cereibacter sphaeroides (strain ATCC 17029 / ATH 2.4.9) (Rhodobacter sphaeroides).